We begin with the raw amino-acid sequence, 215 residues long: MGLLAYIPTNVLATYLTLVLRSIGFTTFQANLLAIPNFVLHILLLFGLTWSTEKCNNRLGLSLLQPLYTVPLLAVLRFWKGTMFNKWGTYAIITLILDNPYIHAICVSLCSRNSQSVKTRTVSTCLYNMFVQAGLIISSNIYAKSDAPLYRKGNGVLFGLALFMFPILIGSKLIYVYINKQRDKRWNAMSEEEKDHYLSTTSDAGSRRLDFRFYH.

Transmembrane regions (helical) follow at residues 3–23 (LLAY…LRSI), 30–50 (ANLL…GLTW), 59–79 (LGLS…LRFW), 87–107 (WGTY…AICV), 122–142 (VSTC…SNIY), and 156–176 (VLFG…LIYV).

Belongs to the major facilitator superfamily. Allantoate permease family.

It is found in the membrane. This is an uncharacterized protein from Saccharomyces cerevisiae (strain ATCC 204508 / S288c) (Baker's yeast).